A 140-amino-acid chain; its full sequence is Profilin (140 aa).

At S2 the chain carries N-acetylserine.

It belongs to the profilin family. As to quaternary structure, occurs in many kinds of cells as a complex with monomeric actin in a 1:1 ratio.

It is found in the cytoplasm. It localises to the cytoskeleton. Its function is as follows. Binds to actin and affects the structure of the cytoskeleton. At high concentrations, profilin prevents the polymerization of actin, whereas it enhances it at low concentrations. By binding to PIP2, it inhibits the formation of IP3 and DG. This chain is Profilin, found in Heliocidaris crassispina (Sea urchin).